A 198-amino-acid polypeptide reads, in one-letter code: Neutrophil gelatinase-associated lipocalin (198 aa).

Positions 1–20 (MPLGLLWLGLALLGALHAQA) are cleaved as a signal peptide. Gln21 carries the post-translational modification Pyrrolidone carboxylic acid. 72 to 74 (YAT) contacts a carboxymycobactin. Asn85 is a glycosylation site (N-linked (GlcNAc...) asparagine). The cysteines at positions 96 and 195 are disulfide-linked. Tyr126 is a binding site for enterobactin. A carboxymycobactin contacts are provided by Lys145, Lys154, and Tyr158. Lys154 provides a ligand contact to enterobactin.

The protein belongs to the calycin superfamily. Lipocalin family. In terms of assembly, monomer. Homodimer; disulfide-linked. Heterodimer; disulfide-linked with MMP9. Detected in neutrophils (at protein level). Expressed in bone marrow and in tissues that are prone to exposure to microorganism. High expression is found in bone marrow as well as in uterus, prostate, salivary gland, stomach, appendix, colon, trachea and lung. Expressed in the medullary tubules of the kidney. Not found in the small intestine or peripheral blood leukocytes.

The protein localises to the secreted. It is found in the cytoplasmic granule lumen. It localises to the cytoplasmic vesicle lumen. Its function is as follows. Iron-trafficking protein involved in multiple processes such as apoptosis, innate immunity and renal development. Binds iron through association with 2,3-dihydroxybenzoic acid (2,3-DHBA), a siderophore that shares structural similarities with bacterial enterobactin, and delivers or removes iron from the cell, depending on the context. Iron-bound form (holo-24p3) is internalized following binding to the SLC22A17 (24p3R) receptor, leading to release of iron and subsequent increase of intracellular iron concentration. In contrast, association of the iron-free form (apo-24p3) with the SLC22A17 (24p3R) receptor is followed by association with an intracellular siderophore, iron chelation and iron transfer to the extracellular medium, thereby reducing intracellular iron concentration. Involved in apoptosis due to interleukin-3 (IL3) deprivation: iron-loaded form increases intracellular iron concentration without promoting apoptosis, while iron-free form decreases intracellular iron levels, inducing expression of the proapoptotic protein BCL2L11/BIM, resulting in apoptosis. Involved in innate immunity; limits bacterial proliferation by sequestering iron bound to microbial siderophores, such as enterobactin. Can also bind siderophores from M.tuberculosis. The polypeptide is Neutrophil gelatinase-associated lipocalin (LCN2) (Homo sapiens (Human)).